Consider the following 154-residue polypeptide: Putative pre-16S rRNA nuclease (154 aa).

The protein belongs to the YqgF nuclease family.

The protein localises to the cytoplasm. Could be a nuclease involved in processing of the 5'-end of pre-16S rRNA. The polypeptide is Putative pre-16S rRNA nuclease (Rickettsia rickettsii (strain Iowa)).